Reading from the N-terminus, the 232-residue chain is uncharacterized protein (232 aa).

The 232-residue stretch at 1–232 (MIIKKSGGRW…LYTMGVSARF (232 aa)) folds into the Autotransporter domain.

This is an uncharacterized protein from Escherichia coli (strain K12).